We begin with the raw amino-acid sequence, 768 residues long: ATP-dependent RNA helicase DBP4 (768 aa).

The Q motif motif lies at 41–69; sequence VFFKDLPISNSTLKGLNDSAFLKLTDIQR. The 175-residue stretch at 72–246 folds into the Helicase ATP-binding domain; the sequence is IPMSLKGYDI…RLSLTDYKTI (175 aa). Position 85–92 (85–92) interacts with ATP; it reads AKTGSGKT. Residues 194-197 carry the DEAD box motif; the sequence is DEAD. One can recognise a Helicase C-terminal domain in the interval 280–439; it reads KLDMLYSFIK…SIKPQLQSLL (160 aa). Disordered stretches follow at residues 581–612 and 653–754; these read EEEL…KGNA and KDVM…EPQT. The segment covering 653-666 has biased composition (basic and acidic residues); the sequence is KDVMNEVDVEDKQV. Basic residues predominate over residues 667 to 678; it reads AKQKKQEKKRKR. Acidic residues predominate over residues 711–721; that stretch reads DMQDPDSDDEE.

This sequence belongs to the DEAD box helicase family. DDX10/DBP4 subfamily. As to quaternary structure, interacts with the U3 and U14 snoRNAs. Associates with pre-ribosomal complexes.

The protein localises to the nucleus. Its subcellular location is the nucleolus. It catalyses the reaction ATP + H2O = ADP + phosphate + H(+). Functionally, ATP-dependent RNA helicase required for ribosome biogenesis. Involved in the release of U14 snoRNA in pre-ribosomal complexes. Required for pre-rRNA cleavage at site A2. In Vanderwaltozyma polyspora (strain ATCC 22028 / DSM 70294 / BCRC 21397 / CBS 2163 / NBRC 10782 / NRRL Y-8283 / UCD 57-17) (Kluyveromyces polysporus), this protein is ATP-dependent RNA helicase DBP4 (DBP4).